Consider the following 363-residue polypeptide: tRNA N6-adenosine threonylcarbamoyltransferase (363 aa).

Residues His121 and His125 each coordinate Fe cation. Residues 143 to 147 (LASGG), Asp176, Gly189, and Asn287 each bind substrate. Asp315 serves as a coordination point for Fe cation.

The protein belongs to the KAE1 / TsaD family. Fe(2+) serves as cofactor.

It localises to the cytoplasm. It carries out the reaction L-threonylcarbamoyladenylate + adenosine(37) in tRNA = N(6)-L-threonylcarbamoyladenosine(37) in tRNA + AMP + H(+). Its function is as follows. Required for the formation of a threonylcarbamoyl group on adenosine at position 37 (t(6)A37) in tRNAs that read codons beginning with adenine. Is involved in the transfer of the threonylcarbamoyl moiety of threonylcarbamoyl-AMP (TC-AMP) to the N6 group of A37, together with TsaE and TsaB. TsaD likely plays a direct catalytic role in this reaction. This chain is tRNA N6-adenosine threonylcarbamoyltransferase, found in Rhodopseudomonas palustris (strain ATCC BAA-98 / CGA009).